The following is a 224-amino-acid chain: Cytochrome c oxidase subunit 2 (224 aa).

Residues 1–26 (MSTWGQINLMDPASPIQMEMMLFHDH) lie on the Mitochondrial intermembrane side of the membrane. Residues 27-48 (AMAILIGIFTLVSLLGVKLCFN) form a helical membrane-spanning segment. Residues 49–62 (TLSTRTMHEAQLLE) lie on the Mitochondrial matrix side of the membrane. The chain crosses the membrane as a helical span at residues 63-82 (TLWTILPAFLLVWLALPSLR). At 83–224 (LLYLLDEQGS…DVKDFIKMCN (142 aa)) the chain is on the mitochondrial intermembrane side. 6 residues coordinate Cu cation: His161, Cys196, Glu198, Cys200, His204, and Met207. Residue Glu198 coordinates Mg(2+).

It belongs to the cytochrome c oxidase subunit 2 family. In terms of assembly, component of the cytochrome c oxidase (complex IV, CIV), a multisubunit enzyme composed of a catalytic core of 3 subunits and several supernumerary subunits. The complex exists as a monomer or a dimer and forms supercomplexes (SCs) in the inner mitochondrial membrane with ubiquinol-cytochrome c oxidoreductase (cytochrome b-c1 complex, complex III, CIII). Cu cation is required as a cofactor.

It localises to the mitochondrion inner membrane. The catalysed reaction is 4 Fe(II)-[cytochrome c] + O2 + 8 H(+)(in) = 4 Fe(III)-[cytochrome c] + 2 H2O + 4 H(+)(out). Component of the cytochrome c oxidase, the last enzyme in the mitochondrial electron transport chain which drives oxidative phosphorylation. The respiratory chain contains 3 multisubunit complexes succinate dehydrogenase (complex II, CII), ubiquinol-cytochrome c oxidoreductase (cytochrome b-c1 complex, complex III, CIII) and cytochrome c oxidase (complex IV, CIV), that cooperate to transfer electrons derived from NADH and succinate to molecular oxygen, creating an electrochemical gradient over the inner membrane that drives transmembrane transport and the ATP synthase. Cytochrome c oxidase is the component of the respiratory chain that catalyzes the reduction of oxygen to water. Electrons originating from reduced cytochrome c in the intermembrane space (IMS) are transferred via the dinuclear copper A center (CU(A)) of subunit 2 and heme A of subunit 1 to the active site in subunit 1, a binuclear center (BNC) formed by heme A3 and copper B (CU(B)). The BNC reduces molecular oxygen to 2 water molecules using 4 electrons from cytochrome c in the IMS and 4 protons from the mitochondrial matrix. This chain is Cytochrome c oxidase subunit 2 (COII), found in Albinaria caerulea (Land snail).